Consider the following 775-residue polypeptide: Melanoma-associated antigen D1 (775 aa).

A disordered region spans residues 37–330 (SEAPPTSQAT…PARQTPSAWQ (294 aa)). The span at 39–50 (APPTSQATAAAS) shows a compositional bias: low complexity. Composition is skewed to polar residues over residues 52-63 (PNASPQSSQPPT), 84-100 (KAQN…SQAR), 107-120 (KNQS…QNGT), 149-178 (GQNS…NQPK), 221-235 (AQTS…NVES), 247-258 (VNNLNVEENNSG), and 296-308 (LAWQ…QNQT). 19 repeat units span residues 292–297 (WQTPLA), 298–303 (WQNPSG), 304–309 (WQNQTA), 329–334 (WQNPVA), 335–340 (WQNPVI), 341–346 (WPNPVI), 347–352 (WQNPVI), 353–358 (WPNPIV), 359–364 (WPGPIV), 365–370 (WPNPMA), 371–376 (WQSTPG), 377–382 (WQSPPS), 383–388 (WQAPPS), 389–394 (WQSPQD), 395–400 (WQGPPD), 401–406 (WQVPPD), 407–412 (WSMPPD), 413–418 (WSFPSD), and 419–424 (WPFPPD). The tract at residues 292–441 (WQTPLAWQNP…IPPDWQNLRP (150 aa)) is 22 X 6 AA tandem repeats of W-[PQ]-X-P-X-X. Low complexity predominate over residues 309–326 (ARQTPPAARQSPPARQTP). The interval 374–409 (TPGWQSPPSWQAPPSWQSPQDWQGPPDWQVPPDWSM) is disordered. Over residues 375–406 (PGWQSPPSWQAPPSWQSPQDWQGPPDWQVPPD) the composition is skewed to low complexity. The 20; approximate repeat unit spans residues 425 to 429 (WIPAD). Tandem repeats lie at residues 430–435 (WPIPPD) and 436–441 (WQNLRP). Low complexity predominate over residues 437 to 452 (QNLRPSPNLRSSSNSR). Residues 437-463 (QNLRPSPNLRSSSNSRASQNQGPPQPR) are disordered. The MAGE domain occupies 468–666 (LQERANKLVK…RDWTAQFMEA (199 aa)).

As to quaternary structure, interacts with DLX5, DLX7 and MSX2 and forms homomultimers. Interacts with UNC5A. Interacts with TRIM28 and PJA1. Interacts with NGFR/p75NTR and RORA. Ubiquitously expressed in many adult tissues, except for the spleen. Expressed in osteoblastic and chondrogenic cell lines and also during embryonic development.

Its subcellular location is the nucleus. The protein localises to the cytoplasm. The protein resides in the cell membrane. Involved in the apoptotic response after nerve growth factor (NGF) binding in neuronal cells. Inhibits cell cycle progression, and facilitates NGFR-mediated apoptosis. May act as a regulator of the function of DLX family members. May enhance ubiquitin ligase activity of RING-type zinc finger-containing E3 ubiquitin-protein ligases. Proposed to act through recruitment and/or stabilization of the Ubl-conjugating enzyme (E2) at the E3:substrate complex. Plays a role in the circadian rhythm regulation. May act as RORA coregulator, modulating the expression of core clock genes such as BMAL1 and NFIL3, induced, or NR1D1, repressed. This Mus musculus (Mouse) protein is Melanoma-associated antigen D1 (Maged1).